The primary structure comprises 652 residues: Sodium-dependent nutrient amino acid transporter 1 (652 aa).

The segment at 1 to 54 (MELKGVHQQNGTSNGTGAVGAEGESAPPTAPATAEAAASLETTTEKVDAEQQKP) is disordered. Over 1-58 (MELKGVHQQNGTSNGTGAVGAEGESAPPTAPATAEAAASLETTTEKVDAEQQKPERTN) the chain is Cytoplasmic. Over residues 7–16 (HQQNGTSNGT) the composition is skewed to polar residues. The span at 21 to 42 (AEGESAPPTAPATAEAAASLET) shows a compositional bias: low complexity. Basic and acidic residues predominate over residues 43–54 (TTEKVDAEQQKP). 4 helical membrane-spanning segments follow: residues 59–79 (WGNGLEFLMSCISVSVGLGNV), 92–112 (GAFLIPYIIVLFLIGKPMYYL), 130–150 (VVPGFVGVGYGQAFATICIIT), and 155–175 (LLALTLYYLFVSFQSVLPWSY). Residues Asn-201 and Asn-204 are each glycosylated (N-linked (GlcNAc...) asparagine). The next 9 helical transmembrane spans lie at 240–260 (PDWKLTLALFVSWVVIFLVIM), 269–289 (AAYFLALFPYVVLFILLVRAV), 318–338 (AVVQCFFSLAVGSGPIIMFAS), 352–372 (IVTTLDTLTSLLGGITIFAIL), 412–432 (LFSVLFFFMLFVLGIGSIVAL), 458–478 (ICGFLMGLVYVTPGGQWILTL), 485–505 (TYVVFILAIFELAGIVWIYGM), 527–547 (CWSFFTPVMMIVIFIYSMVTI), and 564–584 (AGWLLFGIGAAQFPLWWMWYI).

It belongs to the sodium:neurotransmitter symporter (SNF) (TC 2.A.22) family.

It is found in the membrane. Its function is as follows. Unusual broad substrate spectrum amino acid:sodium cotransporter that promotes absorption of the D isomers of essential amino acids. Neutral amino acids are the preferred substrates, especially methionine and phenylalanine. The chain is Sodium-dependent nutrient amino acid transporter 1 from Drosophila persimilis (Fruit fly).